The following is a 275-amino-acid chain: MSNSRQHQGHFARKRFGQNFLVDHGVIDAIVAAIRPERGERMVEIGPGLGALTGPVIARLATPDSPLHAVELDRDLIGRLKQRFGELLELHEGDALAFDFGSLALPGEKPSLRIIGNLPYNISSPLLFHLMSFAPVVIDQHFMLQNEVVERMVAEPGTKAFSRLSVMLQYRYVMDKLIDVPPESFQPPPKVDSAIVRMIPHAPHELPAVDPAVLGEVVTAAFSQRRKMLRNTLGGYRDLVDFDALGFDLARRAEDVGVDEYVRVAQAACAARAGR.

S-adenosyl-L-methionine is bound by residues asparagine 19, leucine 21, glycine 46, glutamate 71, aspartate 94, and asparagine 117.

This sequence belongs to the class I-like SAM-binding methyltransferase superfamily. rRNA adenine N(6)-methyltransferase family. RsmA subfamily.

It is found in the cytoplasm. The enzyme catalyses adenosine(1518)/adenosine(1519) in 16S rRNA + 4 S-adenosyl-L-methionine = N(6)-dimethyladenosine(1518)/N(6)-dimethyladenosine(1519) in 16S rRNA + 4 S-adenosyl-L-homocysteine + 4 H(+). In terms of biological role, specifically dimethylates two adjacent adenosines (A1518 and A1519) in the loop of a conserved hairpin near the 3'-end of 16S rRNA in the 30S particle. May play a critical role in biogenesis of 30S subunits. The polypeptide is Ribosomal RNA small subunit methyltransferase A (Burkholderia thailandensis (strain ATCC 700388 / DSM 13276 / CCUG 48851 / CIP 106301 / E264)).